A 300-amino-acid chain; its full sequence is Protoheme IX farnesyltransferase (300 aa).

Helical transmembrane passes span 24–44, 48–68, 94–114, 118–138, 146–166, 172–192, 217–237, 239–259, and 278–298; these read VTQLAVFCAVIGMFLATPGMV, VLLGGTIGIGLLAGSAFAINC, LQILAFSTVLGGLGAWTLYTF, LTIWLTIATFVGYAVIYTLLL, IVIGGASGAMPPALGWAAVTG, AWILVLIIFVWTPPHFWVLAL, LHILLYTVILFAVTMMPFISG, SGAVYLTSAVLLGALFLAYAW, and IVYLSLLFAALLVDHYARPVI.

Belongs to the UbiA prenyltransferase family. Protoheme IX farnesyltransferase subfamily.

Its subcellular location is the cell inner membrane. It carries out the reaction heme b + (2E,6E)-farnesyl diphosphate + H2O = Fe(II)-heme o + diphosphate. Its pathway is porphyrin-containing compound metabolism; heme O biosynthesis; heme O from protoheme: step 1/1. In terms of biological role, converts heme B (protoheme IX) to heme O by substitution of the vinyl group on carbon 2 of heme B porphyrin ring with a hydroxyethyl farnesyl side group. The protein is Protoheme IX farnesyltransferase of Burkholderia mallei (strain NCTC 10247).